Consider the following 362-residue polypeptide: Dihydroorotate dehydrogenase (quinone) (362 aa).

FMN is bound by residues 62 to 66 (AGYDK) and Thr86. Lys66 provides a ligand contact to substrate. Position 111 to 115 (111 to 115 (NRLGF)) interacts with substrate. Residues Asn139 and Asn170 each contribute to the FMN site. Asn170 is a binding site for substrate. Catalysis depends on Ser173, which acts as the Nucleophile. Asn175 serves as a coordination point for substrate. Lys215 and Ser243 together coordinate FMN. Residue 244 to 245 (NT) participates in substrate binding. FMN contacts are provided by residues Gly266, Gly295, and 316 to 317 (YS).

This sequence belongs to the dihydroorotate dehydrogenase family. Type 2 subfamily. As to quaternary structure, monomer. Requires FMN as cofactor.

The protein localises to the cell membrane. It catalyses the reaction (S)-dihydroorotate + a quinone = orotate + a quinol. The protein operates within pyrimidine metabolism; UMP biosynthesis via de novo pathway; orotate from (S)-dihydroorotate (quinone route): step 1/1. Catalyzes the conversion of dihydroorotate to orotate with quinone as electron acceptor. The sequence is that of Dihydroorotate dehydrogenase (quinone) from Sinorhizobium medicae (strain WSM419) (Ensifer medicae).